Here is a 358-residue protein sequence, read N- to C-terminus: Protein SRG1 (358 aa).

The region spanning 209-309 (SVQSMRMNYY…RLSIATFHNV (101 aa)) is the Fe2OG dioxygenase domain. Positions 233, 235, and 290 each coordinate Fe cation.

The protein belongs to the iron/ascorbate-dependent oxidoreductase family. In terms of tissue distribution, low expression in roots and leaves.

The chain is Protein SRG1 (SRG1) from Arabidopsis thaliana (Mouse-ear cress).